The chain runs to 133 residues: Small ribosomal subunit protein uS8 (133 aa).

Residues 1–28 (MANHDPISDMLTRIRNASEKRHEKTKVP) are disordered. Positions 16 to 26 (NASEKRHEKTK) are enriched in basic and acidic residues.

The protein belongs to the universal ribosomal protein uS8 family. As to quaternary structure, part of the 30S ribosomal subunit. Contacts proteins S5 and S12.

In terms of biological role, one of the primary rRNA binding proteins, it binds directly to 16S rRNA central domain where it helps coordinate assembly of the platform of the 30S subunit. The polypeptide is Small ribosomal subunit protein uS8 (Prochlorococcus marinus (strain NATL1A)).